The sequence spans 541 residues: Membrane protein insertase YidC (541 aa).

A run of 5 helical transmembrane segments spans residues 6-26 (NILL…WQAD), 349-369 (FVGN…GLLF), 420-440 (GGCL…WVLL), 457-477 (LSVQ…MFVM), and 500-520 (MIFT…WLVG).

Belongs to the OXA1/ALB3/YidC family. Type 1 subfamily. In terms of assembly, interacts with the Sec translocase complex via SecD. Specifically interacts with transmembrane segments of nascent integral membrane proteins during membrane integration.

It is found in the cell inner membrane. Functionally, required for the insertion and/or proper folding and/or complex formation of integral membrane proteins into the membrane. Involved in integration of membrane proteins that insert both dependently and independently of the Sec translocase complex, as well as at least some lipoproteins. Aids folding of multispanning membrane proteins. The chain is Membrane protein insertase YidC from Shewanella sp. (strain ANA-3).